Reading from the N-terminus, the 337-residue chain is tRNA N6-adenosine threonylcarbamoyltransferase (337 aa).

Fe cation-binding residues include His-111 and His-115. Residues 134 to 138, Asp-167, Gly-180, and Asn-272 contribute to the substrate site; that span reads LVSGG. Asp-300 serves as a coordination point for Fe cation.

Belongs to the KAE1 / TsaD family. Fe(2+) serves as cofactor.

Its subcellular location is the cytoplasm. The enzyme catalyses L-threonylcarbamoyladenylate + adenosine(37) in tRNA = N(6)-L-threonylcarbamoyladenosine(37) in tRNA + AMP + H(+). In terms of biological role, required for the formation of a threonylcarbamoyl group on adenosine at position 37 (t(6)A37) in tRNAs that read codons beginning with adenine. Is involved in the transfer of the threonylcarbamoyl moiety of threonylcarbamoyl-AMP (TC-AMP) to the N6 group of A37, together with TsaE and TsaB. TsaD likely plays a direct catalytic role in this reaction. In Escherichia coli (strain K12 / MC4100 / BW2952), this protein is tRNA N6-adenosine threonylcarbamoyltransferase.